The chain runs to 184 residues: Probable cobalt-precorrin-6B C(15)-methyltransferase (decarboxylating) (184 aa).

Residues Thr12, 36 to 40, Asp59, and Ala87 contribute to the S-adenosyl-L-methionine site; that span reads GCGTG.

The protein belongs to the methyltransferase superfamily. Archaeal-type CbiT family.

It carries out the reaction Co-precorrin-6B + S-adenosyl-L-methionine = Co-precorrin-7 + S-adenosyl-L-homocysteine + CO2. It participates in cofactor biosynthesis; adenosylcobalamin biosynthesis; cob(II)yrinate a,c-diamide from sirohydrochlorin (anaerobic route): step 8/10. Its function is as follows. Catalyzes the methylation of C-15 in cobalt-precorrin-6B followed by the decarboxylation of C-12 to form cobalt-precorrin-7. The polypeptide is Probable cobalt-precorrin-6B C(15)-methyltransferase (decarboxylating) (Methanosarcina acetivorans (strain ATCC 35395 / DSM 2834 / JCM 12185 / C2A)).